The following is a 301-amino-acid chain: DSC E3 ubiquitin ligase complex subunit B (301 aa).

3 consecutive transmembrane segments (helical) span residues 9 to 29, 52 to 72, and 90 to 110; these read APITKLLLIYTIASSIALSIL, LATWQLAGFTNSTEALFAAML, and TFIISTLPYTSLLPPLLLVLL. Over residues 268-284 the composition is skewed to low complexity; the sequence is AAAAASGNAGSASEASG. The segment at 268–301 is disordered; that stretch reads AAAAASGNAGSASEASGQRQRRREGGIMDRLRAL. Basic and acidic residues predominate over residues 290 to 301; that stretch reads REGGIMDRLRAL.

Component of the DSC E3 ubiquitin ligase complex composed of dscA, dscB, dscC and dscD.

The protein localises to the endoplasmic reticulum membrane. It catalyses the reaction S-ubiquitinyl-[E2 ubiquitin-conjugating enzyme]-L-cysteine + [acceptor protein]-L-lysine = [E2 ubiquitin-conjugating enzyme]-L-cysteine + N(6)-ubiquitinyl-[acceptor protein]-L-lysine.. It participates in protein modification; protein ubiquitination. Its function is as follows. Component of the DSC E3 ubiquitin ligase complex which is required for the srbA transcriptional activator proteolytic cleavage to release the soluble transcription factor from the membrane in low oxygen or sterol conditions. Required for growth during hypoxia and triazole drug susceptibility, as well as for virulence in a murine model of invasive pulmonary aspergillosis (IPA). This chain is DSC E3 ubiquitin ligase complex subunit B, found in Aspergillus fumigatus (strain ATCC MYA-4609 / CBS 101355 / FGSC A1100 / Af293) (Neosartorya fumigata).